The following is a 299-amino-acid chain: 21S rRNA pseudouridine(2819) synthase (299 aa).

Residue aspartate 106 is part of the active site.

Belongs to the pseudouridine synthase RluA family.

It localises to the mitochondrion. The catalysed reaction is uridine(2819) in 21S rRNA = pseudouridine(2819) in 21S rRNA. Its function is as follows. Pseudouridylate synthase responsible for the pseudouridine-2819 formation in mitochondrial 21S rRNA. May modulate the efficiency or the fidelity of the mitochondrial translation machinery. In Kluyveromyces lactis (strain ATCC 8585 / CBS 2359 / DSM 70799 / NBRC 1267 / NRRL Y-1140 / WM37) (Yeast), this protein is 21S rRNA pseudouridine(2819) synthase (PUS5).